Consider the following 238-residue polypeptide: Deoxyribose-phosphate aldolase (238 aa).

Asp102 acts as the Proton donor/acceptor in catalysis. The active-site Schiff-base intermediate with acetaldehyde is the Lys164. The active-site Proton donor/acceptor is the Lys193.

The protein belongs to the DeoC/FbaB aldolase family. DeoC type 1 subfamily.

It localises to the cytoplasm. It catalyses the reaction 2-deoxy-D-ribose 5-phosphate = D-glyceraldehyde 3-phosphate + acetaldehyde. It participates in carbohydrate degradation; 2-deoxy-D-ribose 1-phosphate degradation; D-glyceraldehyde 3-phosphate and acetaldehyde from 2-deoxy-alpha-D-ribose 1-phosphate: step 2/2. Functionally, catalyzes a reversible aldol reaction between acetaldehyde and D-glyceraldehyde 3-phosphate to generate 2-deoxy-D-ribose 5-phosphate. This is Deoxyribose-phosphate aldolase from Rhodospirillum rubrum (strain ATCC 11170 / ATH 1.1.1 / DSM 467 / LMG 4362 / NCIMB 8255 / S1).